The primary structure comprises 103 residues: Large ribosomal subunit protein bL21 (103 aa).

This sequence belongs to the bacterial ribosomal protein bL21 family. Part of the 50S ribosomal subunit. Contacts protein L20.

In terms of biological role, this protein binds to 23S rRNA in the presence of protein L20. This chain is Large ribosomal subunit protein bL21, found in Pseudomonas aeruginosa (strain LESB58).